A 155-amino-acid chain; its full sequence is Transcriptional repressor NrdR (155 aa).

Residues 3 to 34 (CPYCGHLEDRVVDSRETQDGQATRRRRACLSC) fold into a zinc finger. Positions 49-139 (PQVVKKDGRR…VYRAFRDVGE (91 aa)) constitute an ATP-cone domain.

It belongs to the NrdR family. It depends on Zn(2+) as a cofactor.

Negatively regulates transcription of bacterial ribonucleotide reductase nrd genes and operons by binding to NrdR-boxes. This Anaeromyxobacter sp. (strain K) protein is Transcriptional repressor NrdR.